Reading from the N-terminus, the 81-residue chain is Putative defensin-like protein 188 (81 aa).

The first 19 residues, 1-19 (MKNSSLLFILIVVFVISSS), serve as a signal peptide directing secretion. Cystine bridges form between C31-C81, C37-C57, C43-C75, and C47-C77.

This sequence belongs to the DEFL family.

It is found in the secreted. The sequence is that of Putative defensin-like protein 188 (LCR41) from Arabidopsis thaliana (Mouse-ear cress).